Here is a 288-residue protein sequence, read N- to C-terminus: 4-hydroxy-3-methylbut-2-enyl diphosphate reductase (288 aa).

[4Fe-4S] cluster is bound at residue Cys-12. The (2E)-4-hydroxy-3-methylbut-2-enyl diphosphate site is built by His-42 and His-77. Dimethylallyl diphosphate-binding residues include His-42 and His-77. 2 residues coordinate isopentenyl diphosphate: His-42 and His-77. Cys-99 lines the [4Fe-4S] cluster pocket. His-127 contacts (2E)-4-hydroxy-3-methylbut-2-enyl diphosphate. His-127 contacts dimethylallyl diphosphate. His-127 lines the isopentenyl diphosphate pocket. Glu-129 serves as the catalytic Proton donor. Thr-165 lines the (2E)-4-hydroxy-3-methylbut-2-enyl diphosphate pocket. Cys-193 contacts [4Fe-4S] cluster. (2E)-4-hydroxy-3-methylbut-2-enyl diphosphate-binding residues include Ser-221, Ser-222, Asn-223, and Ser-265. Residues Ser-221, Ser-222, Asn-223, and Ser-265 each contribute to the dimethylallyl diphosphate site. Isopentenyl diphosphate-binding residues include Ser-221, Ser-222, Asn-223, and Ser-265.

This sequence belongs to the IspH family. [4Fe-4S] cluster is required as a cofactor.

It carries out the reaction isopentenyl diphosphate + 2 oxidized [2Fe-2S]-[ferredoxin] + H2O = (2E)-4-hydroxy-3-methylbut-2-enyl diphosphate + 2 reduced [2Fe-2S]-[ferredoxin] + 2 H(+). It catalyses the reaction dimethylallyl diphosphate + 2 oxidized [2Fe-2S]-[ferredoxin] + H2O = (2E)-4-hydroxy-3-methylbut-2-enyl diphosphate + 2 reduced [2Fe-2S]-[ferredoxin] + 2 H(+). The protein operates within isoprenoid biosynthesis; dimethylallyl diphosphate biosynthesis; dimethylallyl diphosphate from (2E)-4-hydroxy-3-methylbutenyl diphosphate: step 1/1. Its pathway is isoprenoid biosynthesis; isopentenyl diphosphate biosynthesis via DXP pathway; isopentenyl diphosphate from 1-deoxy-D-xylulose 5-phosphate: step 6/6. Functionally, catalyzes the conversion of 1-hydroxy-2-methyl-2-(E)-butenyl 4-diphosphate (HMBPP) into a mixture of isopentenyl diphosphate (IPP) and dimethylallyl diphosphate (DMAPP). Acts in the terminal step of the DOXP/MEP pathway for isoprenoid precursor biosynthesis. The polypeptide is 4-hydroxy-3-methylbut-2-enyl diphosphate reductase (Caldanaerobacter subterraneus subsp. tengcongensis (strain DSM 15242 / JCM 11007 / NBRC 100824 / MB4) (Thermoanaerobacter tengcongensis)).